The following is a 305-amino-acid chain: Cytochrome c biogenesis protein CcsA (305 aa).

The next 8 membrane-spanning stretches (helical) occupy residues 11-31 (GLGF…FWAV), 37-57 (TGIV…QLVL), 63-83 (GHFP…ACTL), 96-116 (IVAA…SFAL), 141-161 (VIMV…AVLL), 212-232 (TITV…VWAN), 246-263 (TWAL…HTRL), and 275-295 (VAVV…LLGI).

It belongs to the CcmF/CycK/Ccl1/NrfE/CcsA family. May interact with ccs1.

The protein localises to the cellular thylakoid membrane. Required during biogenesis of c-type cytochromes (cytochrome c6 and cytochrome f) at the step of heme attachment. This is Cytochrome c biogenesis protein CcsA from Parasynechococcus marenigrum (strain WH8102).